A 321-amino-acid chain; its full sequence is uncharacterized protein (321 aa).

An Exonuclease domain is found at 130-314 (NLVYDLETTG…NDVDALIKIM (185 aa)).

This is an uncharacterized protein from Acanthamoeba polyphaga (Amoeba).